Here is a 76-residue protein sequence, read N- to C-terminus: Envelope small membrane protein (76 aa).

Residues 1 to 14 (MLQLVNDNGLVVNV) are Virion surface-facing. Residues 15-35 (ILWLFVLFFLLIISITFVQLV) form a helical membrane-spanning segment. Residues 36 to 76 (NLCFTCHRLCNSAVYTPIGRLYRVYKSYMRIDPLPSTVIDV) lie on the Intravirion side of the membrane.

Belongs to the alphacoronaviruses E protein family. As to quaternary structure, homopentamer. Interacts with membrane protein M in the budding compartment of the host cell, which is located between endoplasmic reticulum and the Golgi complex. Interacts with Nucleoprotein. Interacts with host IRF3; this interaction inhibits type I IFN production.

It localises to the host Golgi apparatus membrane. Its subcellular location is the host endoplasmic reticulum. Functionally, plays a central role in virus morphogenesis and assembly. Acts as a viroporin and self-assembles in host membranes forming pentameric protein-lipid pores that allow ion transport. Also plays a role in the induction of apoptosis. Counteracts the production of type I interferon by interacting with host IRF3 component and preventing its translocation to the host nucleus. This is Envelope small membrane protein from Sus scrofa (Pig).